The chain runs to 452 residues: Maltoporin (452 aa).

A signal peptide spans 1-25; the sequence is MMITLRKLPLAVAVAAGVMSAQAMA.

The protein belongs to the porin LamB (TC 1.B.3) family. In terms of assembly, homotrimer formed of three 18-stranded antiparallel beta-barrels, containing three independent channels.

It is found in the cell outer membrane. It catalyses the reaction beta-maltose(in) = beta-maltose(out). In terms of biological role, involved in the transport of maltose and maltodextrins. The sequence is that of Maltoporin from Salmonella choleraesuis (strain SC-B67).